Reading from the N-terminus, the 97-residue chain is Large ribosomal subunit protein uL23 (97 aa).

The protein belongs to the universal ribosomal protein uL23 family. Part of the 50S ribosomal subunit. Contacts protein L29, and trigger factor when it is bound to the ribosome.

Functionally, one of the early assembly proteins it binds 23S rRNA. One of the proteins that surrounds the polypeptide exit tunnel on the outside of the ribosome. Forms the main docking site for trigger factor binding to the ribosome. The sequence is that of Large ribosomal subunit protein uL23 from Agrobacterium fabrum (strain C58 / ATCC 33970) (Agrobacterium tumefaciens (strain C58)).